Here is a 149-residue protein sequence, read N- to C-terminus: MAKKITGYVKLQVPAGAANPSPPIGPALGQRGLNIMEFCKAFNAKTAQIEKGTPIPVIITAYQDRSFTFEMKQPPVSFFLKKAAGLKIGKKPASGSKTPGKGAPAGKVTEAQIREIAEKKMPDLNCDSVDAAVAMIRGSARAMGLEITG.

It belongs to the universal ribosomal protein uL11 family. Part of the ribosomal stalk of the 50S ribosomal subunit. Interacts with L10 and the large rRNA to form the base of the stalk. L10 forms an elongated spine to which L12 dimers bind in a sequential fashion forming a multimeric L10(L12)X complex. Post-translationally, one or more lysine residues are methylated.

In terms of biological role, forms part of the ribosomal stalk which helps the ribosome interact with GTP-bound translation factors. The polypeptide is Large ribosomal subunit protein uL11 (Methylobacterium nodulans (strain LMG 21967 / CNCM I-2342 / ORS 2060)).